A 141-amino-acid chain; its full sequence is Nucleoside diphosphate kinase (141 aa).

6 residues coordinate ATP: K11, F59, R87, T93, R104, and N114. H117 acts as the Pros-phosphohistidine intermediate in catalysis.

The protein belongs to the NDK family. As to quaternary structure, homotetramer. Mg(2+) serves as cofactor.

The protein localises to the cytoplasm. The enzyme catalyses a 2'-deoxyribonucleoside 5'-diphosphate + ATP = a 2'-deoxyribonucleoside 5'-triphosphate + ADP. It catalyses the reaction a ribonucleoside 5'-diphosphate + ATP = a ribonucleoside 5'-triphosphate + ADP. Functionally, major role in the synthesis of nucleoside triphosphates other than ATP. The ATP gamma phosphate is transferred to the NDP beta phosphate via a ping-pong mechanism, using a phosphorylated active-site intermediate. The sequence is that of Nucleoside diphosphate kinase from Acidithiobacillus ferrooxidans (strain ATCC 53993 / BNL-5-31) (Leptospirillum ferrooxidans (ATCC 53993)).